The sequence spans 119 residues: MAGRGKLIAVIGDEDTVTGFLLGGIGELNKNRHPNFLVVEKDTTINEIEDTFRQFLNRDDIGIILINQYIAEMVRHALDAHQQSIPAVLEIPSKEHPYDAAKDSILRRARGMFTAEDLR.

This sequence belongs to the V-ATPase F subunit family. In terms of assembly, V-ATPase is a heteromultimeric enzyme made up of two complexes: the ATP-hydrolytic V1 complex and the proton translocation V0 complex. The V1 complex consists of three catalytic AB heterodimers that form a heterohexamer, three peripheral stalks each consisting of EG heterodimers, one central rotor including subunits D and F, and the regulatory subunits C and H. The proton translocation complex V0 consists of the proton transport subunit a, a ring of proteolipid subunits c9c'', rotary subunit d, subunits e and f, and the accessory subunits ATP6AP1/Ac45 and ATP6AP2/PRR.

Its subcellular location is the cytoplasmic vesicle. The protein resides in the secretory vesicle. The protein localises to the synaptic vesicle membrane. It localises to the clathrin-coated vesicle membrane. Its function is as follows. Subunit of the V1 complex of vacuolar(H+)-ATPase (V-ATPase), a multisubunit enzyme composed of a peripheral complex (V1) that hydrolyzes ATP and a membrane integral complex (V0) that translocates protons. V-ATPase is responsible for acidifying and maintaining the pH of intracellular compartments and in some cell types, is targeted to the plasma membrane, where it is responsible for acidifying the extracellular environment. The sequence is that of V-type proton ATPase subunit F (ATP6V1F) from Homo sapiens (Human).